The following is a 377-amino-acid chain: Homoserine O-succinyltransferase (377 aa).

An AB hydrolase-1 domain is found at 50–359 (NAVLVCHALS…SSHGHDSFLM (310 aa)). Ser156 (nucleophile) is an active-site residue. Arg226 contacts substrate. Active-site residues include Asp321 and His354. Asp355 contributes to the substrate binding site.

The protein belongs to the AB hydrolase superfamily. MetX family. In terms of assembly, homodimer.

It is found in the cytoplasm. The catalysed reaction is L-homoserine + succinyl-CoA = O-succinyl-L-homoserine + CoA. It participates in amino-acid biosynthesis; L-methionine biosynthesis via de novo pathway; O-succinyl-L-homoserine from L-homoserine: step 1/1. Transfers a succinyl group from succinyl-CoA to L-homoserine, forming succinyl-L-homoserine. The chain is Homoserine O-succinyltransferase from Nitrosospira multiformis (strain ATCC 25196 / NCIMB 11849 / C 71).